Reading from the N-terminus, the 337-residue chain is MGRVKMSETFSYWIEDNIYPKKWDIIYKQRENQVFLIKINKGSSEYIIVSERFNETMSNSFEIIKIERIQNKSLWRNFDESRKRLNEKYQVSNLDFLESTLFHGTRANDPKLIFSSKVGFDIGKSSFGNYGIGLYFALNASYSNNYSFEESPTSGCKQMFLCRVLLGNSAPPTQKELKNDSTQDSIKGPGGEMFILKSNHTAYPDYLISYRQKVIVNNNTNNNNKNKNKNNNKNNNKNIKIQNENKNENKIENKNENENQFDNYGFNTNFSQNLYDKYGLKYPSQEKPKPGFFTPNKELEYEIFPLLFEKNEKEEELEELEDYQLALLLSTSSLGSK.

Residues 21-231 (KKWDIIYKQR…NNNKNKNKNN (211 aa)) form the PARP catalytic domain. Residues 218-242 (NNTNNNNKNKNKNNNKNNNKNIKIQ) are compositionally biased toward low complexity. Residues 218–247 (NNTNNNNKNKNKNNNKNNNKNIKIQNENKN) form a disordered region.

The enzyme catalyses L-aspartyl-[protein] + NAD(+) = 4-O-(ADP-D-ribosyl)-L-aspartyl-[protein] + nicotinamide. It catalyses the reaction L-glutamyl-[protein] + NAD(+) = 5-O-(ADP-D-ribosyl)-L-glutamyl-[protein] + nicotinamide. The catalysed reaction is NAD(+) + (ADP-D-ribosyl)n-acceptor = nicotinamide + (ADP-D-ribosyl)n+1-acceptor + H(+).. The polypeptide is Probable poly [ADP-ribose] polymerase DDB_G0278045 (Dictyostelium discoideum (Social amoeba)).